The chain runs to 614 residues: Putative Na(+)/H(+) antiporter YjbQ (614 aa).

13 helical membrane-spanning segments follow: residues 3 to 23 (HTSV…PILL), 32 to 52 (VVVA…NLVV), 57 to 77 (WLQT…GLEI), 107 to 127 (IFVG…LAGF), 130 to 150 (NAFL…VPTL), 163 to 183 (IILL…AVFS), 193 to 213 (MWLL…GRVF), 225 to 244 (GTIQ…LVAL), 248 to 267 (LGAE…SLLS), 282 to 302 (GFLI…WTLF), 307 to 327 (ILIM…IPVM), 338 to 358 (IFAS…AATI), and 368 to 388 (NMSG…PICF). In terms of domain architecture, RCK N-terminal spans 401–519 (KKTITFIGAN…EQGISIFSIL (119 aa)). Positions 533 to 614 (PGVMKLLTNQ…VTDLKKTLEG (82 aa)) constitute an RCK C-terminal domain.

The protein belongs to the monovalent cation:proton antiporter 2 (CPA2) transporter (TC 2.A.37) family.

It localises to the cell membrane. Binds cyclic di-AMP (c-di-AMP), which may regulate the transporter activity. Its function is as follows. Probable Na(+)/H(+) antiporter. This chain is Putative Na(+)/H(+) antiporter YjbQ, found in Bacillus subtilis (strain 168).